A 485-amino-acid chain; its full sequence is Ribulose bisphosphate carboxylase large chain (485 aa).

2 residues coordinate substrate: asparagine 124 and threonine 174. Lysine 176 serves as the catalytic Proton acceptor. Lysine 178 contributes to the substrate binding site. Mg(2+) contacts are provided by lysine 202, aspartate 204, and glutamate 205. An N6-carboxylysine modification is found at lysine 202. The Proton acceptor role is filled by histidine 294. The substrate site is built by arginine 295, histidine 327, and serine 379.

Belongs to the RuBisCO large chain family. Type I subfamily. Heterohexadecamer of 8 large chains and 8 small chains. Requires Mg(2+) as cofactor.

It carries out the reaction 2 (2R)-3-phosphoglycerate + 2 H(+) = D-ribulose 1,5-bisphosphate + CO2 + H2O. It catalyses the reaction D-ribulose 1,5-bisphosphate + O2 = 2-phosphoglycolate + (2R)-3-phosphoglycerate + 2 H(+). RuBisCO catalyzes two reactions: the carboxylation of D-ribulose 1,5-bisphosphate, the primary event in carbon dioxide fixation, as well as the oxidative fragmentation of the pentose substrate. Both reactions occur simultaneously and in competition at the same active site. The sequence is that of Ribulose bisphosphate carboxylase large chain from Rhodopseudomonas palustris (strain HaA2).